We begin with the raw amino-acid sequence, 235 residues long: Large ribosomal subunit protein uL1 (235 aa).

The protein belongs to the universal ribosomal protein uL1 family. In terms of assembly, part of the 50S ribosomal subunit.

Functionally, binds directly to 23S rRNA. The L1 stalk is quite mobile in the ribosome, and is involved in E site tRNA release. Its function is as follows. Protein L1 is also a translational repressor protein, it controls the translation of the L11 operon by binding to its mRNA. This Micrococcus luteus (strain ATCC 4698 / DSM 20030 / JCM 1464 / CCM 169 / CCUG 5858 / IAM 1056 / NBRC 3333 / NCIMB 9278 / NCTC 2665 / VKM Ac-2230) (Micrococcus lysodeikticus) protein is Large ribosomal subunit protein uL1.